The chain runs to 249 residues: MMISDATMMQQNYYLNNAQKASDKALENIAAVRAISGVDSANLAIADSLRSQSSTIDQGVANAYDAIGVLQIADASLTNISQSADRLNELSVKMNNAALNDSQKGMLRTEATRIQESINDSFNNATYNGKNVFQTMNFVVGSGTETTNLNPLATGGLSIDNQDSITNFMDQLGSLRSEIGSGINAITSNINASVQNSINSKAAENNLLNNDMAKNVNDFNANYLKENAAAFVAAQSNMQLQSKIANLLQ.

In terms of assembly, interacts with FliS.

Its subcellular location is the secreted. In terms of biological role, might play a role in virulence. The chain is Secreted flagellin C (flaC) from Campylobacter jejuni subsp. jejuni serotype O:6 (strain 81116 / NCTC 11828).